The primary structure comprises 109 residues: Small ribosomal subunit protein uS15c (109 aa).

This sequence belongs to the universal ribosomal protein uS15 family. As to quaternary structure, part of the 30S ribosomal subunit.

It localises to the plastid. The protein localises to the chloroplast. The polypeptide is Small ribosomal subunit protein uS15c (rps15-A) (Trachelium caeruleum (Blue throatwort)).